Consider the following 304-residue polypeptide: Ornithine carbamoyltransferase (304 aa).

Residues 47-50 (STRT), Arg98, and 125-128 (HPCQ) each bind carbamoyl phosphate. Residues Asn156, Asp221, and 225–226 (SM) contribute to the L-ornithine site. Carbamoyl phosphate is bound by residues 262-263 (CL) and Arg290.

The protein belongs to the aspartate/ornithine carbamoyltransferase superfamily. OTCase family.

Its subcellular location is the cytoplasm. It carries out the reaction carbamoyl phosphate + L-ornithine = L-citrulline + phosphate + H(+). It participates in amino-acid biosynthesis; L-arginine biosynthesis; L-arginine from L-ornithine and carbamoyl phosphate: step 1/3. Functionally, reversibly catalyzes the transfer of the carbamoyl group from carbamoyl phosphate (CP) to the N(epsilon) atom of ornithine (ORN) to produce L-citrulline. This is Ornithine carbamoyltransferase from Methanococcus maripaludis (strain C7 / ATCC BAA-1331).